Reading from the N-terminus, the 158-residue chain is uncharacterized protein (158 aa).

The protein resides in the mitochondrion. This is an uncharacterized protein from Arabidopsis thaliana (Mouse-ear cress).